The sequence spans 1081 residues: Teashirt homolog 3 (1081 aa).

Disordered stretches follow at residues 141–161 (PSSE…SSCG) and 238–257 (HYRD…WSKP). Residues 148-161 (GSSSSSSSSSSSCG) are compositionally biased toward low complexity. 2 C2H2-type zinc fingers span residues 214 to 238 (FRCK…ETGH) and 275 to 299 (LKCM…KTKH). Positions 238–247 (HYRDDNHETD) are enriched in basic and acidic residues. Residues 325–364 (SLELELPSSPDSTGGTPKATISDTNDALQKNSNPYITPNN) form a disordered region. Polar residues predominate over residues 335 to 364 (DSTGGTPKATISDTNDALQKNSNPYITPNN). A C2H2-type 3; atypical zinc finger spans residues 386 to 404 (LKCMECGSSHDTLQELTAH). The span at 473-491 (EVDKEKAVTDEKPKQKDKP) shows a compositional bias: basic and acidic residues. 4 disordered regions span residues 473–502 (EVDK…DISS), 579–604 (NSEI…PMPK), 626–687 (EKMK…LAEP), and 855–897 (TESH…RQSN). A compositionally biased stretch (polar residues) spans 581–603 (EIVSPTKNQTLVSPPSSQTSPMP). Positions 606–630 (NFHAMEELVKKVTEKVAKVEEKMKE) form a coiled coil. Ser-682 is subject to Phosphoserine. The span at 856–869 (ESHTSKSSTPSSIS) shows a compositional bias: low complexity. The homeobox; atypical DNA-binding region spans 891-961 (RKGRQSNWNP…NVKYQLRRTG (71 aa)). C2H2-type zinc fingers lie at residues 976 to 998 (FFCN…LESH) and 1041 to 1064 (YQCK…SKTH).

This sequence belongs to the teashirt C2H2-type zinc-finger protein family. In terms of assembly, interacts (via homeobox domain) with APBB1 (via PID domain 1). Interacts (via N-terminus) with HDAC1 and HDAC2; the interaction is direct. Found in a trimeric complex with APBB1 and HDAC1; the interaction between HDAC1 and APBB1 is mediated by TSHZ3. As to expression, expressed in brain; strongly reduced in post-mortem elderly subjects with Alzheimer disease. Expressed in the fetal neocortex.

Its subcellular location is the nucleus. The protein resides in the cell projection. The protein localises to the growth cone. In terms of biological role, transcriptional regulator involved in developmental processes. Functions in association with APBB1, SET and HDAC factors as a transcriptional repressor, that inhibits the expression of CASP4. TSHZ3-mediated transcription repression involves the recruitment of histone deacetylases HDAC1 and HDAC2. Associates with chromatin in a region surrounding the CASP4 transcriptional start site(s). Regulates the development of neurons involved in both respiratory rhythm and airflow control. Promotes maintenance of nucleus ambiguus (nA) motoneurons, which govern upper airway function, and establishes a respiratory rhythm generator (RRG) activity compatible with survival at birth. Involved in the differentiation of the proximal uretic smooth muscle cells during developmental processes. Involved in the up-regulation of myocardin, that directs the expression of smooth muscle cells in the proximal ureter. Involved in the modulation of glutamatergic synaptic transmission and long-term synaptic potentiation. The sequence is that of Teashirt homolog 3 (TSHZ3) from Homo sapiens (Human).